The primary structure comprises 163 residues: UPF0134 protein MPN_139 (163 aa).

The protein belongs to the UPF0134 family.

The chain is UPF0134 protein MPN_139 from Mycoplasma pneumoniae (strain ATCC 29342 / M129 / Subtype 1) (Mycoplasmoides pneumoniae).